A 258-amino-acid chain; its full sequence is Indole-3-glycerol phosphate synthase (258 aa).

It belongs to the TrpC family.

The catalysed reaction is 1-(2-carboxyphenylamino)-1-deoxy-D-ribulose 5-phosphate + H(+) = (1S,2R)-1-C-(indol-3-yl)glycerol 3-phosphate + CO2 + H2O. The protein operates within amino-acid biosynthesis; L-tryptophan biosynthesis; L-tryptophan from chorismate: step 4/5. The polypeptide is Indole-3-glycerol phosphate synthase (Geobacillus kaustophilus (strain HTA426)).